We begin with the raw amino-acid sequence, 227 residues long: Cytochrome c oxidase subunit 2 (227 aa).

The Mitochondrial intermembrane portion of the chain corresponds to 1–14 (MAYPFQLGLQDATS). A helical membrane pass occupies residues 15–45 (PIMEELLHFHDHTLMIVFLISSLVLYIISLM). Topologically, residues 46 to 59 (LTTKLTHTSTMDAQ) are mitochondrial matrix. A helical membrane pass occupies residues 60 to 87 (EVETVWTILPAIILILIALPSLRILYMM). The Mitochondrial intermembrane portion of the chain corresponds to 88–227 (DEINNPSLTV…YFETWSALMV (140 aa)). Cu cation contacts are provided by histidine 161, cysteine 196, glutamate 198, cysteine 200, histidine 204, and methionine 207. Glutamate 198 is a Mg(2+) binding site. Tyrosine 218 carries the post-translational modification Phosphotyrosine.

The protein belongs to the cytochrome c oxidase subunit 2 family. Component of the cytochrome c oxidase (complex IV, CIV), a multisubunit enzyme composed of 14 subunits. The complex is composed of a catalytic core of 3 subunits MT-CO1, MT-CO2 and MT-CO3, encoded in the mitochondrial DNA, and 11 supernumerary subunits COX4I, COX5A, COX5B, COX6A, COX6B, COX6C, COX7A, COX7B, COX7C, COX8 and NDUFA4, which are encoded in the nuclear genome. The complex exists as a monomer or a dimer and forms supercomplexes (SCs) in the inner mitochondrial membrane with NADH-ubiquinone oxidoreductase (complex I, CI) and ubiquinol-cytochrome c oxidoreductase (cytochrome b-c1 complex, complex III, CIII), resulting in different assemblies (supercomplex SCI(1)III(2)IV(1) and megacomplex MCI(2)III(2)IV(2)). Found in a complex with TMEM177, COA6, COX18, COX20, SCO1 and SCO2. Interacts with TMEM177 in a COX20-dependent manner. Interacts with COX20. Interacts with COX16. Requires Cu cation as cofactor.

It localises to the mitochondrion inner membrane. It carries out the reaction 4 Fe(II)-[cytochrome c] + O2 + 8 H(+)(in) = 4 Fe(III)-[cytochrome c] + 2 H2O + 4 H(+)(out). Component of the cytochrome c oxidase, the last enzyme in the mitochondrial electron transport chain which drives oxidative phosphorylation. The respiratory chain contains 3 multisubunit complexes succinate dehydrogenase (complex II, CII), ubiquinol-cytochrome c oxidoreductase (cytochrome b-c1 complex, complex III, CIII) and cytochrome c oxidase (complex IV, CIV), that cooperate to transfer electrons derived from NADH and succinate to molecular oxygen, creating an electrochemical gradient over the inner membrane that drives transmembrane transport and the ATP synthase. Cytochrome c oxidase is the component of the respiratory chain that catalyzes the reduction of oxygen to water. Electrons originating from reduced cytochrome c in the intermembrane space (IMS) are transferred via the dinuclear copper A center (CU(A)) of subunit 2 and heme A of subunit 1 to the active site in subunit 1, a binuclear center (BNC) formed by heme A3 and copper B (CU(B)). The BNC reduces molecular oxygen to 2 water molecules using 4 electrons from cytochrome c in the IMS and 4 protons from the mitochondrial matrix. The sequence is that of Cytochrome c oxidase subunit 2 (MT-CO2) from Canis adustus (Side-striped jackal).